The primary structure comprises 81 residues: Protein Vpu (81 aa).

Residues methionine 1–isoleucine 7 are Extracellular-facing. A helical membrane pass occupies residues alanine 8–isoleucine 28. The Cytoplasmic segment spans residues glutamate 29–leucine 81. A disordered region spans residues alanine 50–leucine 81. 2 positions are modified to phosphoserine; by host CK2: serine 53 and serine 57. Basic and acidic residues predominate over residues glutamate 62 to leucine 81.

The protein belongs to the HIV-1 VPU protein family. As to quaternary structure, homopentamer. Interacts with host CD4 and BRTC; these interactions induce proteasomal degradation of CD4. Interacts with host BST2; this interaction leads to the degradation of host BST2. Interacts with host FBXW11. Interacts with host AP1M1; this interaction plays a role in the mistrafficking and subsequent degradation of host BST2. Interacts with host RANBP2; this interaction allows Vpu to down-regulate host BLM sumoylation. In terms of processing, phosphorylated by host CK2. This phosphorylation is necessary for interaction with human BTRC and degradation of CD4.

Its subcellular location is the host membrane. Its activity is regulated as follows. Ion channel activity is inhibited by hexamethylene amiloride in vitro. Functionally, enhances virion budding by targeting host CD4 and Tetherin/BST2 to proteasome degradation. Degradation of CD4 prevents any unwanted premature interactions between viral Env and its host receptor CD4 in the endoplasmic reticulum. Degradation of antiretroviral protein Tetherin/BST2 is important for virion budding, as BST2 tethers new viral particles to the host cell membrane. Mechanistically, Vpu bridges either CD4 or BST2 to BTRC, a substrate recognition subunit of the Skp1/Cullin/F-box protein E3 ubiquitin ligase, induces their ubiquitination and subsequent proteasomal degradation. The alteration of the E3 ligase specificity by Vpu seems to promote the degradation of host IKBKB, leading to NF-kappa-B down-regulation and subsequent apoptosis. Acts as a viroporin that forms an oligomeric ion channel in membranes. Modulates the host DNA repair mechanisms to promote degradation of nuclear viral cDNA in cells that are already productively infected in order to suppress immune sensing and proviral hyper-integration (superinfection). Manipulates PML-NBs and modulates SUMOylation of host BLM protein thereby enhancing its DNA-end processing activity toward viral unintegrated linear DNA. Also inhibits RAD52-mediated homologous repair of viral cDNA, preventing the generation of dead-end circular forms of single copies of the long terminal repeat and permitting sustained nucleolytic attack. The sequence is that of Protein Vpu from Human immunodeficiency virus type 1 group M subtype D (isolate NDK) (HIV-1).